We begin with the raw amino-acid sequence, 380 residues long: Alcohol dehydrogenase (380 aa).

Zn(2+) contacts are provided by Cys-48, Thr-50, His-70, Cys-100, Cys-103, Cys-106, Cys-114, and Cys-178. An alcohol-binding residues include Thr-50 and His-70. Thr-50 is a binding site for NAD(+). NAD(+) is bound by residues 203–208, Asp-227, Arg-232, Thr-273, Val-296, 296–298, Phe-323, and Arg-373; these read GLGAVG and VGV.

This sequence belongs to the zinc-containing alcohol dehydrogenase family. Homodimer. The cofactor is Zn(2+).

It is found in the cytoplasm. It catalyses the reaction a primary alcohol + NAD(+) = an aldehyde + NADH + H(+). The enzyme catalyses a secondary alcohol + NAD(+) = a ketone + NADH + H(+). The sequence is that of Alcohol dehydrogenase (ADH) from Malus domestica (Apple).